The primary structure comprises 276 residues: Large ribosomal subunit protein uL2c (276 aa).

A disordered region spans residues 225–276; that stretch reads AMNPVDHPHGGGEGRTPIGRKKPVTPWGYSALGKKSRKRNRYSDASILRRRE.

It belongs to the universal ribosomal protein uL2 family. In terms of assembly, part of the 50S ribosomal subunit.

The protein resides in the plastid. The protein localises to the chloroplast. This is Large ribosomal subunit protein uL2c (rpl2) from Pinus koraiensis (Korean pine).